The chain runs to 127 residues: Small ribosomal subunit protein uS12 (127 aa).

Basic residues predominate over residues 11–20 (GRKPKKKKSK). Residues 11–30 (GRKPKKKKSKAPALQGNPQK) are disordered. At aspartate 89 the chain carries 3-methylthioaspartic acid. Residues 105-127 (AGVEGRRQSRSKYGAKRPKDQKK) are disordered. Over residues 112–127 (QSRSKYGAKRPKDQKK) the composition is skewed to basic residues.

The protein belongs to the universal ribosomal protein uS12 family. In terms of assembly, part of the 30S ribosomal subunit. Contacts proteins S8 and S17. May interact with IF1 in the 30S initiation complex.

Functionally, with S4 and S5 plays an important role in translational accuracy. In terms of biological role, interacts with and stabilizes bases of the 16S rRNA that are involved in tRNA selection in the A site and with the mRNA backbone. Located at the interface of the 30S and 50S subunits, it traverses the body of the 30S subunit contacting proteins on the other side and probably holding the rRNA structure together. The combined cluster of proteins S8, S12 and S17 appears to hold together the shoulder and platform of the 30S subunit. This is Small ribosomal subunit protein uS12 from Thermotoga maritima (strain ATCC 43589 / DSM 3109 / JCM 10099 / NBRC 100826 / MSB8).